A 364-amino-acid polypeptide reads, in one-letter code: tRNA 2-selenouridine synthase (364 aa).

Residues 14–137 (LIADTPIIDV…LRQTAIQATI (124 aa)) form the Rhodanese domain. Catalysis depends on Cys-97, which acts as the S-selanylcysteine intermediate.

This sequence belongs to the SelU family. Monomer.

The enzyme catalyses 5-methylaminomethyl-2-thiouridine(34) in tRNA + selenophosphate + (2E)-geranyl diphosphate + H2O + H(+) = 5-methylaminomethyl-2-selenouridine(34) in tRNA + (2E)-thiogeraniol + phosphate + diphosphate. It catalyses the reaction 5-methylaminomethyl-2-thiouridine(34) in tRNA + (2E)-geranyl diphosphate = 5-methylaminomethyl-S-(2E)-geranyl-thiouridine(34) in tRNA + diphosphate. The catalysed reaction is 5-methylaminomethyl-S-(2E)-geranyl-thiouridine(34) in tRNA + selenophosphate + H(+) = 5-methylaminomethyl-2-(Se-phospho)selenouridine(34) in tRNA + (2E)-thiogeraniol. It carries out the reaction 5-methylaminomethyl-2-(Se-phospho)selenouridine(34) in tRNA + H2O = 5-methylaminomethyl-2-selenouridine(34) in tRNA + phosphate. Involved in the post-transcriptional modification of the uridine at the wobble position (U34) of tRNA(Lys), tRNA(Glu) and tRNA(Gln). Catalyzes the conversion of 2-thiouridine (S2U-RNA) to 2-selenouridine (Se2U-RNA). Acts in a two-step process involving geranylation of 2-thiouridine (S2U) to S-geranyl-2-thiouridine (geS2U) and subsequent selenation of the latter derivative to 2-selenouridine (Se2U) in the tRNA chain. The protein is tRNA 2-selenouridine synthase of Escherichia coli O157:H7.